Here is an 877-residue protein sequence, read N- to C-terminus: DNA polymerase I (877 aa).

Residues 177–270 (TPAQFIDLKA…LEDLVYSGPD (94 aa)) form the 5'-3' exonuclease domain. In terms of domain architecture, 3'-5' exonuclease spans 302–465 (DFTIVDQISQ…TEPILLEKLS (164 aa)).

The protein belongs to the DNA polymerase type-A family. As to quaternary structure, single-chain monomer with multiple functions.

It carries out the reaction DNA(n) + a 2'-deoxyribonucleoside 5'-triphosphate = DNA(n+1) + diphosphate. Functionally, in addition to polymerase activity, this DNA polymerase exhibits 3'-5' and 5'-3' exonuclease activity. This Streptococcus pneumoniae (strain ATCC BAA-255 / R6) protein is DNA polymerase I (polA).